We begin with the raw amino-acid sequence, 210 residues long: MTAAQAAGEEAPPGVRSVKVVLVGDGGCGKTSLLMVFADGAFPESYTPTVFERYMVNLQVKGKPVHLHIWDTAGQDDYDRLRPLFYPDASVLLLCFDVTSPNSFDNIFNRWYPEVNHFCKKVPIIVVGCKTDLRKDKSLVNKLRRNGLEPVTYHRGQEMARSVGAVAYLECSARLHDNVHAVFQEAAEVALSSRGRNFWRRITQGFCVVT.

24–31 (GDGGCGKT) is a binding site for GTP. The Effector region motif lies at 46 to 54 (YTPTVFERY). GTP contacts are provided by residues 71–75 (DTAGQ) and 129–132 (CKTD). Cysteine 207 carries the post-translational modification Cysteine methyl ester. A lipid anchor (S-geranylgeranyl cysteine) is attached at cysteine 207. Residues 208 to 210 (VVT) constitute a propeptide, removed in mature form.

Belongs to the small GTPase superfamily. Rho family. In terms of assembly, interacts (in GTP-bound form) with DIAPH2 isoform 3, DAPK3, FILIP1 and WHAMM. Interacts with PAK5. Interacts (independent of GTP-loaded status) with ANKFY1. In terms of tissue distribution, heart, placenta, liver, skeletal muscle, and pancreas and, with weaker intensity, in several other tissues.

The protein localises to the cell membrane. It localises to the early endosome. Its function is as follows. Involved in endosome dynamics. May coordinate membrane transport with the function of the cytoskeleton. Involved in the internalization and trafficking of activated tyrosine kinase receptors such as PDGFRB. Participates in the reorganization of actin cytoskeleton; the function seems to involve WHAMM and includes regulation of filopodia formation and actin filament bundling. Can modulate the effect of DAPK3 in reorganization of actin cytoskeleton and focal adhesion dissolution. The polypeptide is Rho-related GTP-binding protein RhoD (Homo sapiens (Human)).